A 110-amino-acid chain; its full sequence is uncharacterized protein (110 aa).

Positions 16 to 46 (ELDKLRECEERLSVIEKQKQSSKQESEETYI) form a coiled coil. The span at 85 to 96 (EEKDKKCQRKPE) shows a compositional bias: basic and acidic residues. A disordered region spans residues 85–110 (EEKDKKCQRKPEAPSTPAVTIRSKRQ).

This is an uncharacterized protein from Bacillus subtilis (strain 168).